The following is a 58-amino-acid chain: Small ribosomal subunit protein bS21 (58 aa).

The span at 32 to 42 shows a compositional bias: basic and acidic residues; it reads IRKREHYEKPS. The disordered stretch occupies residues 32–58; sequence IRKREHYEKPSVRRKKKSEAARKRKFN. Residues 43 to 58 are compositionally biased toward basic residues; it reads VRRKKKSEAARKRKFN.

Belongs to the bacterial ribosomal protein bS21 family.

The sequence is that of Small ribosomal subunit protein bS21 from Lachnospira eligens (strain ATCC 27750 / DSM 3376 / VPI C15-48 / C15-B4) (Eubacterium eligens).